A 239-amino-acid chain; its full sequence is Large ribosomal subunit protein uL2 (239 aa).

Residues 200–239 are disordered; it reads VNHPHGGKEHHIGRPSTVSRRAPPGRKVGHIAARRTGRRK. Residues 222 to 239 show a composition bias toward basic residues; sequence PPGRKVGHIAARRTGRRK.

Belongs to the universal ribosomal protein uL2 family. As to quaternary structure, part of the 50S ribosomal subunit. Forms a bridge to the 30S subunit in the 70S ribosome.

Its function is as follows. One of the primary rRNA binding proteins. Required for association of the 30S and 50S subunits to form the 70S ribosome, for tRNA binding and peptide bond formation. It has been suggested to have peptidyltransferase activity; this is somewhat controversial. Makes several contacts with the 16S rRNA in the 70S ribosome. This is Large ribosomal subunit protein uL2 from Thermococcus kodakarensis (strain ATCC BAA-918 / JCM 12380 / KOD1) (Pyrococcus kodakaraensis (strain KOD1)).